Here is a 106-residue protein sequence, read N- to C-terminus: UPF0449 protein C19orf25 homolog (106 aa).

The protein belongs to the UPF0449 family.

This is UPF0449 protein C19orf25 homolog from Xenopus tropicalis (Western clawed frog).